The following is a 173-amino-acid chain: Large ribosomal subunit protein bL17 (173 aa).

The disordered stretch occupies residues 136–173 (AEEEAPAVEAEATEATEAPVEEAAAVEAEAPADAEKAE). Residues 138–149 (EEAPAVEAEATE) are compositionally biased toward acidic residues. Over residues 150 to 166 (ATEAPVEEAAAVEAEAP) the composition is skewed to low complexity.

Belongs to the bacterial ribosomal protein bL17 family. Part of the 50S ribosomal subunit. Contacts protein L32.

This is Large ribosomal subunit protein bL17 from Bifidobacterium longum subsp. infantis (strain ATCC 15697 / DSM 20088 / JCM 1222 / NCTC 11817 / S12).